Here is a 271-residue protein sequence, read N- to C-terminus: Pyrroline-5-carboxylate reductase (271 aa).

This sequence belongs to the pyrroline-5-carboxylate reductase family.

Its subcellular location is the cytoplasm. It carries out the reaction L-proline + NADP(+) = (S)-1-pyrroline-5-carboxylate + NADPH + 2 H(+). The enzyme catalyses L-proline + NAD(+) = (S)-1-pyrroline-5-carboxylate + NADH + 2 H(+). The protein operates within amino-acid biosynthesis; L-proline biosynthesis; L-proline from L-glutamate 5-semialdehyde: step 1/1. Catalyzes the reduction of 1-pyrroline-5-carboxylate (PCA) to L-proline. In Haemophilus influenzae (strain ATCC 51907 / DSM 11121 / KW20 / Rd), this protein is Pyrroline-5-carboxylate reductase.